Reading from the N-terminus, the 205-residue chain is uncharacterized protein (205 aa).

An HTH tetR-type domain is found at 11–71; the sequence is DKRQAEILEA…RIIETGLDEG (61 aa). Residues 34–53 constitute a DNA-binding region (H-T-H motif); the sequence is TMKDVVEESGFSRGGVYLYF.

This is an uncharacterized protein from Bacillus subtilis (strain 168).